Here is a 196-residue protein sequence, read N- to C-terminus: Metalloproteinase inhibitor 2 (196 aa).

Residues 1-2 form the signal peptide; it reads RA. Cysteine 3 is a binding site for Zn(2+). Involved in metalloproteinase-binding regions lie at residues 3–6 and 71–72; these read CSCS and SA. 6 disulfide bridges follow: cysteine 3-cysteine 74, cysteine 5-cysteine 103, cysteine 15-cysteine 128, cysteine 130-cysteine 177, cysteine 135-cysteine 140, and cysteine 148-cysteine 169. The NTR domain maps to 3 to 128; the sequence is CSCSPVHPQQ…SLNHRYQMGC (126 aa).

It belongs to the protease inhibitor I35 (TIMP) family. Interacts (via the C-terminal) with MMP2 (via the C-terminal PEX domain); the interaction inhibits the MMP2 activity. In terms of processing, the activity of TIMP2 is dependent on the presence of disulfide bonds.

The protein localises to the secreted. Its function is as follows. Complexes with metalloproteinases (such as collagenases) and irreversibly inactivates them by binding to their catalytic zinc cofactor. This is Metalloproteinase inhibitor 2 (TIMP2) from Cricetulus longicaudatus (Long-tailed dwarf hamster).